A 192-amino-acid chain; its full sequence is NADH-quinone oxidoreductase subunit B (192 aa).

[4Fe-4S] cluster contacts are provided by cysteine 71, cysteine 72, cysteine 136, and cysteine 166.

It belongs to the complex I 20 kDa subunit family. In terms of assembly, NDH-1 is composed of 14 different subunits. Subunits NuoB, C, D, E, F, and G constitute the peripheral sector of the complex. The cofactor is [4Fe-4S] cluster.

It is found in the cell inner membrane. The enzyme catalyses a quinone + NADH + 5 H(+)(in) = a quinol + NAD(+) + 4 H(+)(out). NDH-1 shuttles electrons from NADH, via FMN and iron-sulfur (Fe-S) centers, to quinones in the respiratory chain. The immediate electron acceptor for the enzyme in this species is believed to be ubiquinone. Couples the redox reaction to proton translocation (for every two electrons transferred, four hydrogen ions are translocated across the cytoplasmic membrane), and thus conserves the redox energy in a proton gradient. The sequence is that of NADH-quinone oxidoreductase subunit B from Sinorhizobium medicae (strain WSM419) (Ensifer medicae).